The following is a 188-amino-acid chain: Phosphatidylinositol N-acetylglucosaminyltransferase subunit H (188 aa).

It belongs to the PIGH family. As to quaternary structure, component of the glycosylphosphatidylinositol-N-acetylglucosaminyltransferase (GPI-GnT) complex composed at least by PIGA, PIGC, PIGH, PIGP, PIGQ, PIGY and DPM2. Interacts with PIGQ.

The protein resides in the cytoplasm. Its pathway is glycolipid biosynthesis; glycosylphosphatidylinositol-anchor biosynthesis. Part of the glycosylphosphatidylinositol-N-acetylglucosaminyltransferase (GPI-GnT) complex that catalyzes the transfer of N-acetylglucosamine from UDP-N-acetylglucosamine to phosphatidylinositol and participates in the first step of GPI biosynthesis. The sequence is that of Phosphatidylinositol N-acetylglucosaminyltransferase subunit H from Mus musculus (Mouse).